We begin with the raw amino-acid sequence, 178 residues long: 6,7-dimethyl-8-ribityllumazine synthase (178 aa).

5-amino-6-(D-ribitylamino)uracil-binding positions include F23, 61 to 63, and 85 to 87; these read SFE and AVI. Residue 90–91 coordinates (2S)-2-hydroxy-3-oxobutyl phosphate; it reads QT. H93 functions as the Proton donor in the catalytic mechanism. Y118 is a binding site for 5-amino-6-(D-ribitylamino)uracil. Residue R132 coordinates (2S)-2-hydroxy-3-oxobutyl phosphate.

This sequence belongs to the DMRL synthase family.

It carries out the reaction (2S)-2-hydroxy-3-oxobutyl phosphate + 5-amino-6-(D-ribitylamino)uracil = 6,7-dimethyl-8-(1-D-ribityl)lumazine + phosphate + 2 H2O + H(+). Its pathway is cofactor biosynthesis; riboflavin biosynthesis; riboflavin from 2-hydroxy-3-oxobutyl phosphate and 5-amino-6-(D-ribitylamino)uracil: step 1/2. Its function is as follows. Catalyzes the formation of 6,7-dimethyl-8-ribityllumazine by condensation of 5-amino-6-(D-ribitylamino)uracil with 3,4-dihydroxy-2-butanone 4-phosphate. This is the penultimate step in the biosynthesis of riboflavin. The sequence is that of 6,7-dimethyl-8-ribityllumazine synthase from Thermosynechococcus vestitus (strain NIES-2133 / IAM M-273 / BP-1).